The chain runs to 352 residues: Dihydroorotate dehydrogenase (quinone) (352 aa).

Residues 68–72 (AGFDK) and Thr92 contribute to the FMN site. Substrate is bound at residue Lys72. Position 117–121 (117–121 (NAMGF)) interacts with substrate. The FMN site is built by Asn146 and Asn179. Asn179 lines the substrate pocket. Ser182 acts as the Nucleophile in catalysis. A substrate-binding site is contributed by Asn184. Residues Lys215 and Thr243 each coordinate FMN. Residue 244-245 (NT) participates in substrate binding. Residues Gly263, Gly292, and 313 to 314 (YS) contribute to the FMN site.

It belongs to the dihydroorotate dehydrogenase family. Type 2 subfamily. In terms of assembly, monomer. FMN serves as cofactor.

Its subcellular location is the cell membrane. It catalyses the reaction (S)-dihydroorotate + a quinone = orotate + a quinol. The protein operates within pyrimidine metabolism; UMP biosynthesis via de novo pathway; orotate from (S)-dihydroorotate (quinone route): step 1/1. Its function is as follows. Catalyzes the conversion of dihydroorotate to orotate with quinone as electron acceptor. The polypeptide is Dihydroorotate dehydrogenase (quinone) (Sulfurimonas denitrificans (strain ATCC 33889 / DSM 1251) (Thiomicrospira denitrificans (strain ATCC 33889 / DSM 1251))).